We begin with the raw amino-acid sequence, 662 residues long: Methyl-accepting chemotaxis protein TlpB (662 aa).

The Cytoplasmic portion of the chain corresponds to 1–16 (MGKFIQWIKQPSISKP). Residues 17 to 37 (LIAAFLAVLILPVGVLAYFSY) form a helical membrane-spanning segment. Residues 38–281 (QSAWNALDRE…LQDASSPVLN (244 aa)) are Extracellular-facing. The 76-residue stretch at 153–228 (SEPYTDEATG…KPGTTGSGDW (76 aa)) folds into the Cache domain. The helical transmembrane segment at 282–302 (TAVIILCVSIVIGGILILYII) threads the bilayer. In terms of domain architecture, HAMP spans 303–355 (RAITKPLRKLVSTSAKISSGDLTEVIDIHSKNEFGQLGESFNEMSASLRSVIG). Over 303 to 662 (RAITKPLRKL…DITKKFKIES (360 aa)) the chain is Cytoplasmic. Glutamate methyl ester (Glu) is present on E370. The 237-residue stretch at 374–610 (SAAQTSKATE…EVSSAVEDIS (237 aa)) folds into the Methyl-accepting transducer domain. Q594 carries the post-translational modification Glutamate methyl ester (Gln). A glutamate methyl ester (Glu) mark is found at E629 and E636.

It belongs to the methyl-accepting chemotaxis (MCP) protein family.

It localises to the cell membrane. Chemotactic-signal transducers respond to changes in the concentration of attractants and repellents in the environment, transduce a signal from the outside to the inside of the cell, and facilitate sensory adaptation through the variation of the level of methylation. All amino acids serve as attractants in B.subtilis, they appear to cause an increase in the turnover methyl groups, leading to methylation of an unidentified acceptor, while repellents have been shown to cause a decrease in methyl group turnover. The methyl groups are added by a methyltransferase and removed by a methylesterase. This chain is Methyl-accepting chemotaxis protein TlpB (tlpB), found in Bacillus subtilis (strain 168).